Consider the following 326-residue polypeptide: Transposase InsH for insertion sequence element IS5A (326 aa).

This sequence belongs to the transposase 11 family.

Its function is as follows. Involved in the transposition of the insertion sequence IS5. The polypeptide is Transposase InsH for insertion sequence element IS5A (insH1) (Escherichia coli (strain K12)).